A 218-amino-acid polypeptide reads, in one-letter code: Lipoprotein-releasing system ATP-binding protein LolD (218 aa).

Positions 2-218 constitute an ABC transporter domain; it reads IKLEGITKSF…HMVDGTIKKD (217 aa). 34–41 provides a ligand contact to ATP; it reads GPSGAGKT.

This sequence belongs to the ABC transporter superfamily. Lipoprotein translocase (TC 3.A.1.125) family. The complex is composed of two ATP-binding proteins (LolD) and two transmembrane proteins (LolC and LolE).

It is found in the cell inner membrane. Part of the ABC transporter complex LolCDE involved in the translocation of mature outer membrane-directed lipoproteins, from the inner membrane to the periplasmic chaperone, LolA. Responsible for the formation of the LolA-lipoprotein complex in an ATP-dependent manner. The polypeptide is Lipoprotein-releasing system ATP-binding protein LolD (Bacteroides thetaiotaomicron (strain ATCC 29148 / DSM 2079 / JCM 5827 / CCUG 10774 / NCTC 10582 / VPI-5482 / E50)).